The sequence spans 86 residues: Large ribosomal subunit protein uL23 (86 aa).

The protein belongs to the universal ribosomal protein uL23 family. As to quaternary structure, part of the 50S ribosomal subunit. Contacts protein L29.

Functionally, binds to 23S rRNA. One of the proteins that surrounds the polypeptide exit tunnel on the outside of the ribosome. This Aeropyrum pernix (strain ATCC 700893 / DSM 11879 / JCM 9820 / NBRC 100138 / K1) protein is Large ribosomal subunit protein uL23.